The primary structure comprises 356 residues: Tyrosinase P (356 aa).

A signal peptide spans 1–19 (MGFYRNLVLVAASCTQALG). Residue Asn81 is glycosylated (N-linked (GlcNAc...) asparagine). 2 residues coordinate Cu cation: His87 and His96. Residues Asn148 and Asn193 are each glycosylated (N-linked (GlcNAc...) asparagine). His203 is a Cu cation binding site. N-linked (GlcNAc...) asparagine glycosylation occurs at Asn226. Positions 263 and 286 each coordinate Cu cation. Asn309 carries an N-linked (GlcNAc...) asparagine glycan.

The protein belongs to the tyrosinase family. Cu(2+) is required as a cofactor. Glycosylated.

The protein localises to the endoplasmic reticulum lumen. It is found in the golgi apparatus lumen. The enzyme catalyses aspulvinone E + O2 = (5Z)-3-(3,4-dihydroxyphenyl)-5-[(3,4-dihydroxyphenyl)methylidene]-5-oxo-2,5-dihydrofuran-3-olate. It carries out the reaction aspulvinone E + O2 = (2Z)-2-[(3,4-dioxocyclohexa-1,5-dien-1-yl)methylidene]-4-(4-hydroxyphenyl)-5-oxo-2,5-dihydrofuran-3-olate + H2O. With respect to regulation, activity is inhibited by the presence of dithiothreitol (DTT). Its function is as follows. Tyrosinase; part of the gene cluster that mediates the biosynthesis of Asp-melanin, a pigment that confers resistance against UV light and hampers phagocytosis by soil amoeba. The nonribosomal peptide synthase melA converts 4-hydroxyphenylpyruvate (4-HPPA) to aspulvinone E. The tyrosinase tyrP then performs hydroxylations of both aromatic moieties of aspulvinone E. The product of tyrP is highly unstable, and, due to the high reactivity of methides and ortho-diquinones, the polymeric Asp-melanin forms spontaneously. In Aspergillus terreus, this protein is Tyrosinase P (tyrP).